We begin with the raw amino-acid sequence, 460 residues long: GTPase Der (460 aa).

EngA-type G domains follow at residues 3–167 (FTFA…PEPD) and 189–364 (IRVA…AVWN). GTP-binding positions include 9 to 16 (GRPNVGKS), 56 to 60 (DTAGL), 119 to 122 (NKSE), 195 to 202 (GRPNAGKS), 242 to 246 (DTAGL), and 307 to 310 (NKWD). The 85-residue stretch at 365-449 (TRVPTAALNR…PVRIMLREKA (85 aa)) folds into the KH-like domain.

Belongs to the TRAFAC class TrmE-Era-EngA-EngB-Septin-like GTPase superfamily. EngA (Der) GTPase family. Associates with the 50S ribosomal subunit.

Its function is as follows. GTPase that plays an essential role in the late steps of ribosome biogenesis. The protein is GTPase Der of Rhodopseudomonas palustris (strain BisB5).